A 1382-amino-acid polypeptide reads, in one-letter code: ATP-dependent RNA helicase TDRD9 (1382 aa).

The tract at residues 36–62 is disordered; that stretch reads AAREEVQRQDVAPGAGPAAQAPALAQA. The segment covering 47-62 has biased composition (low complexity); sequence APGAGPAAQAPALAQA. In terms of domain architecture, Helicase ATP-binding spans 142–308; it reads VSLIESNSVV…FAVPVQNKMN (167 aa). Residue 155–162 participates in ATP binding; the sequence is GATGSGKS. Positions 254–257 match the DEAH box motif; it reads DEVH. One can recognise a Helicase C-terminal domain in the interval 377–544; sequence SGAQFVLERS…ILKVKLLDMG (168 aa). The 61-residue stretch at 944-1004 folds into the Tudor domain; the sequence is HPHPDLVCLA…MEIPCQFLEL (61 aa).

Belongs to the DEAD box helicase family. DEAH subfamily. As to quaternary structure, interacts with piRNA-associated proteins PIWIL1 and PIWIL4.

The protein localises to the cytoplasm. It localises to the nucleus. The enzyme catalyses ATP + H2O = ADP + phosphate + H(+). ATP-binding RNA helicase required during spermatogenesis. Required to repress transposable elements and prevent their mobilization, which is essential for the germline integrity. Acts via the piRNA metabolic process, which mediates the repression of transposable elements during meiosis by forming complexes composed of piRNAs and Piwi proteins and governs the methylation and subsequent repression of transposons. Acts downstream of piRNA biogenesis: exclusively required for transposon silencing in the nucleus, suggesting that it acts as a nuclear effector in the nucleus together with PIWIL4. The polypeptide is ATP-dependent RNA helicase TDRD9 (Homo sapiens (Human)).